A 118-amino-acid polypeptide reads, in one-letter code: Small ribosomal subunit protein uS13 (118 aa).

The segment at 95 to 118 is disordered; the sequence is LPLRGQRTRTNARTRKGPRKAIKK.

Belongs to the universal ribosomal protein uS13 family. In terms of assembly, part of the 30S ribosomal subunit. Forms a loose heterodimer with protein S19. Forms two bridges to the 50S subunit in the 70S ribosome.

Functionally, located at the top of the head of the 30S subunit, it contacts several helices of the 16S rRNA. In the 70S ribosome it contacts the 23S rRNA (bridge B1a) and protein L5 of the 50S subunit (bridge B1b), connecting the 2 subunits; these bridges are implicated in subunit movement. Contacts the tRNAs in the A and P-sites. The protein is Small ribosomal subunit protein uS13 of Xylella fastidiosa (strain 9a5c).